We begin with the raw amino-acid sequence, 380 residues long: Coiled-coil domain-containing protein 74B (380 aa).

Disordered stretches follow at residues 1-51 (MSGA…KRNL), 89-108 (LIMN…HLSR), and 128-202 (GGPS…DVPQ). Positions 34-44 (LRPQSPQLRQS) are enriched in polar residues. Residues 47-93 (QKRNLDLEKSLQFLQQQHSEMLAKLHEEIEHLKRENKDLRYKLIMNQ) are a coiled coil. The segment covering 141–151 (RTHRPGGKHGR) has biased composition (basic residues). A compositionally biased stretch (polar residues) spans 165-182 (DSLSTSSFQSVKSISNSG).

This is Coiled-coil domain-containing protein 74B (CCDC74B) from Homo sapiens (Human).